Here is a 357-residue protein sequence, read N- to C-terminus: tRNA-specific 2-thiouridylase MnmA (357 aa).

ATP-binding positions include 3–10 and leucine 29; that span reads AMSGGVDS. Catalysis depends on cysteine 98, which acts as the Nucleophile. A disulfide bridge links cysteine 98 with cysteine 196. Glycine 122 is an ATP binding site. Positions 146 to 148 are interaction with tRNA; it reads KDQ. Cysteine 196 acts as the Cysteine persulfide intermediate in catalysis. Positions 302–303 are interaction with tRNA; the sequence is RY.

Belongs to the MnmA/TRMU family.

Its subcellular location is the cytoplasm. It carries out the reaction S-sulfanyl-L-cysteinyl-[protein] + uridine(34) in tRNA + AH2 + ATP = 2-thiouridine(34) in tRNA + L-cysteinyl-[protein] + A + AMP + diphosphate + H(+). Functionally, catalyzes the 2-thiolation of uridine at the wobble position (U34) of tRNA, leading to the formation of s(2)U34. In Moorella thermoacetica (strain ATCC 39073 / JCM 9320), this protein is tRNA-specific 2-thiouridylase MnmA.